A 73-amino-acid chain; its full sequence is DNA gyrase inhibitor YacG (73 aa).

Cys-14, Cys-17, Cys-30, and Cys-34 together coordinate Zn(2+). Residues Ala-54–His-73 are disordered.

The protein belongs to the DNA gyrase inhibitor YacG family. As to quaternary structure, interacts with GyrB. It depends on Zn(2+) as a cofactor.

In terms of biological role, inhibits all the catalytic activities of DNA gyrase by preventing its interaction with DNA. Acts by binding directly to the C-terminal domain of GyrB, which probably disrupts DNA binding by the gyrase. This chain is DNA gyrase inhibitor YacG, found in Hyphomonas neptunium (strain ATCC 15444).